A 176-amino-acid polypeptide reads, in one-letter code: MASQKHSRGHGSKQMATASTYDHSRHGYGAHGRHRDSGLLDSLGRFFGGERSVPRKGSGKEVHMSRSGYLSSSPQRSPYHAHGRHVDDNPVVHFFRNIVSPRTPPPSQPKRGFSRFSWGAENHKPYYGGYGSRSLEHHKSSYKGYKDPHREGHGSLSRIFKLGGQRSRSSSPMARR.

Basic residues predominate over residues 1–11 (MASQKHSRGHG). The segment at 1 to 176 (MASQKHSRGH…SRSSSPMARR (176 aa)) is disordered. Ala-2 carries the N-acetylalanine modification. Ser-7 bears the Phosphoserine mark. Residues Arg-25 and Arg-33 each carry the citrulline modification. Ser-58 carries the phosphoserine modification. Position 97 is a deamidated asparagine (Asn-97). Residue Thr-103 is modified to Phosphothreonine. Deamidated glutamine is present on Gln-108. Residue Arg-111 is modified to Symmetric dimethylarginine. Ser-117 is modified (phosphoserine). Basic and acidic residues predominate over residues 134-153 (SLEHHKSSYKGYKDPHREGH). A compositionally biased stretch (polar residues) spans 166-176 (RSRSSSPMARR). Residues Ser-167 and Ser-171 each carry the phosphoserine modification. At Arg-176 the chain carries Citrulline.

This sequence belongs to the myelin basic protein family. Homodimer. Post-translationally, as in other animals, several charge isomers may be produced as a result of optional post-translational modifications, such as phosphorylation of serine or threonine residues, deamidation of glutamine or asparagine residues, citrullination and methylation of arginine residues.

It is found in the myelin membrane. Its function is as follows. Is, with PLP, the most abundant protein component of the myelin membrane in the CNS. Plays a role in both the formation and stabilization of this compact multilayer arrangement of bilayers. Each splice variant and charge isomer may have a specialized function in the assembly of an optimized, biochemically functional myelin membrane. The protein is Myelin basic protein (mbp) of Xenopus laevis (African clawed frog).